A 353-amino-acid chain; its full sequence is UDP-N-acetylglucosamine--N-acetylmuramyl-(pentapeptide) pyrophosphoryl-undecaprenol N-acetylglucosamine transferase (353 aa).

UDP-N-acetyl-alpha-D-glucosamine contacts are provided by residues threonine 10–glycine 12, asparagine 124, serine 183, and glutamine 283.

Belongs to the glycosyltransferase 28 family. MurG subfamily.

Its subcellular location is the cell inner membrane. The enzyme catalyses di-trans,octa-cis-undecaprenyl diphospho-N-acetyl-alpha-D-muramoyl-L-alanyl-D-glutamyl-meso-2,6-diaminopimeloyl-D-alanyl-D-alanine + UDP-N-acetyl-alpha-D-glucosamine = di-trans,octa-cis-undecaprenyl diphospho-[N-acetyl-alpha-D-glucosaminyl-(1-&gt;4)]-N-acetyl-alpha-D-muramoyl-L-alanyl-D-glutamyl-meso-2,6-diaminopimeloyl-D-alanyl-D-alanine + UDP + H(+). The protein operates within cell wall biogenesis; peptidoglycan biosynthesis. Its function is as follows. Cell wall formation. Catalyzes the transfer of a GlcNAc subunit on undecaprenyl-pyrophosphoryl-MurNAc-pentapeptide (lipid intermediate I) to form undecaprenyl-pyrophosphoryl-MurNAc-(pentapeptide)GlcNAc (lipid intermediate II). This Helicobacter pylori (strain HPAG1) protein is UDP-N-acetylglucosamine--N-acetylmuramyl-(pentapeptide) pyrophosphoryl-undecaprenol N-acetylglucosamine transferase.